Reading from the N-terminus, the 470-residue chain is Glutamate--tRNA ligase 2 (470 aa).

The 'HIGH' region motif lies at 11–21; the sequence is PSPTGHLHLGG. Positions 238-242 match the 'KMSKS' region motif; sequence KLSKR. K241 is a binding site for ATP.

This sequence belongs to the class-I aminoacyl-tRNA synthetase family. Glutamate--tRNA ligase type 1 subfamily. Monomer.

The protein localises to the cytoplasm. The enzyme catalyses tRNA(Glu) + L-glutamate + ATP = L-glutamyl-tRNA(Glu) + AMP + diphosphate. Its function is as follows. Catalyzes the attachment of glutamate to tRNA(Glu) in a two-step reaction: glutamate is first activated by ATP to form Glu-AMP and then transferred to the acceptor end of tRNA(Glu). In Ehrlichia ruminantium (strain Welgevonden), this protein is Glutamate--tRNA ligase 2.